The chain runs to 1295 residues: Phosphoribosylformylglycinamidine synthase (1295 aa).

Positions 305–327 are disordered; the sequence is WPGAATGSGGEIRDEGATGRGAK. Residues 307-318, 386-388, and A678 each bind ATP; these read GAATGSGGEIRD and TGY. The Mg(2+) site is built by D679, E718, N722, and D884. Residue S886 participates in ATP binding. Positions 1042 to 1295 constitute a Glutamine amidotransferase type-1 domain; sequence VAVLREQGVN…IFRNARKQLG (254 aa). The active-site Nucleophile is the C1135. Residues H1260 and E1262 contribute to the active site.

In the N-terminal section; belongs to the FGAMS family. Monomer.

It is found in the cytoplasm. It catalyses the reaction N(2)-formyl-N(1)-(5-phospho-beta-D-ribosyl)glycinamide + L-glutamine + ATP + H2O = 2-formamido-N(1)-(5-O-phospho-beta-D-ribosyl)acetamidine + L-glutamate + ADP + phosphate + H(+). It functions in the pathway purine metabolism; IMP biosynthesis via de novo pathway; 5-amino-1-(5-phospho-D-ribosyl)imidazole from N(2)-formyl-N(1)-(5-phospho-D-ribosyl)glycinamide: step 1/2. Functionally, phosphoribosylformylglycinamidine synthase involved in the purines biosynthetic pathway. Catalyzes the ATP-dependent conversion of formylglycinamide ribonucleotide (FGAR) and glutamine to yield formylglycinamidine ribonucleotide (FGAM) and glutamate. This chain is Phosphoribosylformylglycinamidine synthase, found in Salmonella paratyphi A (strain ATCC 9150 / SARB42).